Here is a 715-residue protein sequence, read N- to C-terminus: Protein psiH (715 aa).

Residues 1–20 (MNYLKPTIFLILCLVTFVYS) form the signal peptide. Residues 21-651 (QPSTLTIQGT…ICKTGAVVST (631 aa)) lie on the Extracellular side of the membrane. The region spanning 115 to 256 (NYDSKKQVYV…YDYCGVCSGD (142 aa)) is the PA14 domain. Residues Asn149, Asn377, Asn528, and Asn622 are each glycosylated (N-linked (GlcNAc...) asparagine). A helical transmembrane segment spans residues 652-672 (AVIAGVTVAGAVALGVFIYGG). Over 673-715 (KRGYDYWKESRNVQFSGSNSNPLYEQNPNGSGVNPLYNDNSAL) the chain is Cytoplasmic. The disordered stretch occupies residues 690–715 (SNSNPLYEQNPNGSGVNPLYNDNSAL).

It belongs to the prespore-cell-inducing factor family.

The protein localises to the membrane. This is Protein psiH (psiH) from Dictyostelium discoideum (Social amoeba).